We begin with the raw amino-acid sequence, 458 residues long: Argininosuccinate lyase (458 aa).

Belongs to the lyase 1 family. Argininosuccinate lyase subfamily.

Its subcellular location is the cytoplasm. The catalysed reaction is 2-(N(omega)-L-arginino)succinate = fumarate + L-arginine. Its pathway is amino-acid biosynthesis; L-arginine biosynthesis; L-arginine from L-ornithine and carbamoyl phosphate: step 3/3. The chain is Argininosuccinate lyase from Geobacter metallireducens (strain ATCC 53774 / DSM 7210 / GS-15).